A 608-amino-acid polypeptide reads, in one-letter code: Dihydroxyacetone kinase (608 aa).

The DhaK domain maps to 8–357 (YKKDLVLSHL…LDHKTSAPGW (350 aa)). Substrate is bound by residues 53-56 (GSGH), Lys-105, and Asp-110. His-234 (tele-hemiaminal-histidine intermediate) is an active-site residue. Residues 392–599 (KLYADLLESG…LAALISGITD (208 aa)) form the DhaL domain. Residues 421 to 424 (DGDC), 467 to 468 (TS), 523 to 524 (TL), and 584 to 586 (DPG) each bind ATP.

It belongs to the dihydroxyacetone kinase (DAK) family.

Its subcellular location is the cytoplasm. It catalyses the reaction dihydroxyacetone + ATP = dihydroxyacetone phosphate + ADP + H(+). The catalysed reaction is D-glyceraldehyde + ATP = D-glyceraldehyde 3-phosphate + ADP + H(+). Its pathway is polyol metabolism; glycerol fermentation; glycerone phosphate from glycerol (oxidative route): step 2/2. Catalyzes both the phosphorylation of dihydroxyacetone and of glyceraldehyde. In Komagataella pastoris (Yeast), this protein is Dihydroxyacetone kinase (DAK).